A 184-amino-acid chain; its full sequence is Glutathione-regulated potassium-efflux system ancillary protein KefG (184 aa).

This sequence belongs to the NAD(P)H dehydrogenase (quinone) family. KefG subfamily. As to quaternary structure, interacts with KefB.

The protein localises to the cell inner membrane. The catalysed reaction is a quinone + NADH + H(+) = a quinol + NAD(+). The enzyme catalyses a quinone + NADPH + H(+) = a quinol + NADP(+). Functionally, regulatory subunit of a potassium efflux system that confers protection against electrophiles. Required for full activity of KefB. The polypeptide is Glutathione-regulated potassium-efflux system ancillary protein KefG (Escherichia coli O1:K1 / APEC).